The following is a 237-amino-acid chain: Ergosterol biosynthesis protein 29 (237 aa).

Residues 36-56 (ITLFLIVVGTLAFFNELYITI) form a helical membrane-spanning segment.

The protein resides in the endoplasmic reticulum membrane. Its function is as follows. Part of the third module of ergosterol biosynthesis pathway that includes the late steps of the pathway. ERG29 regulates the activity of the iron-containing C4-methylsterol oxidase ERG25. The third module or late pathway involves the ergosterol synthesis itself through consecutive reactions that mainly occur in the endoplasmic reticulum (ER) membrane. Firstly, the squalene synthase ERG9 catalyzes the condensation of 2 farnesyl pyrophosphate moieties to form squalene, which is the precursor of all steroids. Squalene synthase is crucial for balancing the incorporation of farnesyl diphosphate (FPP) into sterol and nonsterol isoprene synthesis. Secondly, the squalene epoxidase ERG1 catalyzes the stereospecific oxidation of squalene to (S)-2,3-epoxysqualene, which is considered to be a rate-limiting enzyme in steroid biosynthesis. Then, the lanosterol synthase ERG7 catalyzes the cyclization of (S)-2,3 oxidosqualene to lanosterol, a reaction that forms the sterol core. In the next steps, lanosterol is transformed to zymosterol through a complex process involving various demethylation, reduction and desaturation reactions. The lanosterol 14-alpha-demethylase ERG11 (also known as CYP51) catalyzes C14-demethylation of lanosterol to produce 4,4'-dimethyl cholesta-8,14,24-triene-3-beta-ol, which is critical for ergosterol biosynthesis. The C-14 reductase ERG24 reduces the C14=C15 double bond of 4,4-dimethyl-cholesta-8,14,24-trienol to produce 4,4-dimethyl-cholesta-8,24-dienol. 4,4-dimethyl-cholesta-8,24-dienol is substrate of the C-4 demethylation complex ERG25-ERG26-ERG27 in which ERG25 catalyzes the three-step monooxygenation required for the demethylation of 4,4-dimethyl and 4alpha-methylsterols, ERG26 catalyzes the oxidative decarboxylation that results in a reduction of the 3-beta-hydroxy group at the C-3 carbon to an oxo group, and ERG27 is responsible for the reduction of the keto group on the C-3. ERG28 has a role as a scaffold to help anchor ERG25, ERG26 and ERG27 to the endoplasmic reticulum and ERG29 regulates the activity of the iron-containing C4-methylsterol oxidase ERG25. Then, the sterol 24-C-methyltransferase ERG6 catalyzes the methyl transfer from S-adenosyl-methionine to the C-24 of zymosterol to form fecosterol. The C-8 sterol isomerase ERG2 catalyzes the reaction which results in unsaturation at C-7 in the B ring of sterols and thus converts fecosterol to episterol. The sterol-C5-desaturase ERG3 then catalyzes the introduction of a C-5 double bond in the B ring to produce 5-dehydroepisterol. The C-22 sterol desaturase ERG5 further converts 5-dehydroepisterol into ergosta-5,7,22,24(28)-tetraen-3beta-ol by forming the C-22(23) double bond in the sterol side chain. Finally, ergosta-5,7,22,24(28)-tetraen-3beta-ol is substrate of the C-24(28) sterol reductase ERG4 to produce ergosterol. Plays a role in maintaining mitochondrial and plasma membrane integrity and consequently impacting the iron homeostasis, respiratory metabolism and antioxidant response. The protein is Ergosterol biosynthesis protein 29 of Saccharomyces cerevisiae (strain ATCC 204508 / S288c) (Baker's yeast).